A 118-amino-acid polypeptide reads, in one-letter code: MARVTVEDCVDKVPNRFELVMLAAHRAREISAGSELTIDRDNDKNPVVSLREIAEETQSADALRERLIESNQTQIEVDEPEEDSMAMLMGGGQPDKPAEDDMSEEKLLRALMEAQGQP.

The disordered stretch occupies residues 78 to 104 (DEPEEDSMAMLMGGGQPDKPAEDDMSE).

Belongs to the RNA polymerase subunit omega family. The RNAP catalytic core consists of 2 alpha, 1 beta, 1 beta' and 1 omega subunit. When a sigma factor is associated with the core the holoenzyme is formed, which can initiate transcription.

It carries out the reaction RNA(n) + a ribonucleoside 5'-triphosphate = RNA(n+1) + diphosphate. Functionally, promotes RNA polymerase assembly. Latches the N- and C-terminal regions of the beta' subunit thereby facilitating its interaction with the beta and alpha subunits. The sequence is that of DNA-directed RNA polymerase subunit omega from Dinoroseobacter shibae (strain DSM 16493 / NCIMB 14021 / DFL 12).